Reading from the N-terminus, the 179-residue chain is UPF0227 protein Sbal_2415 (179 aa).

It belongs to the UPF0227 family.

This chain is UPF0227 protein Sbal_2415, found in Shewanella baltica (strain OS155 / ATCC BAA-1091).